The following is a 65-amino-acid chain: Period circadian protein (65 aa).

A disordered region spans residues 1–65; it reads EGSGGSGSSG…VTLTESLLNK (65 aa). Over residues 18–28 the composition is skewed to polar residues; it reads VRMSSVTNTSN. Positions 29–38 are enriched in low complexity; sequence AGTGTSAGDN. A compositionally biased stretch (polar residues) spans 56–65; it reads VTLTESLLNK.

In terms of assembly, forms a heterodimer with timeless (TIM); the complex then translocates into the nucleus. Post-translationally, phosphorylated with a circadian rhythmicity, probably by the double-time protein (dbt). Phosphorylation could be implicated in the stability of per monomer and in the formation of heterodimer per-tim.

The protein localises to the nucleus. It localises to the cytoplasm. It is found in the perinuclear region. Its function is as follows. Essential for biological clock functions. Determines the period length of circadian and ultradian rhythms; an increase in PER dosage leads to shortened circadian rhythms and a decrease leads to lengthened circadian rhythms. Essential for the circadian rhythmicity of locomotor activity, eclosion behavior, and for the rhythmic component of the male courtship song that originates in the thoracic nervous system. The biological cycle depends on the rhythmic formation and nuclear localization of the TIM-PER complex. Light induces the degradation of TIM, which promotes elimination of PER. Nuclear activity of the heterodimer coordinatively regulates PER and TIM transcription through a negative feedback loop. Behaves as a negative element in circadian transcriptional loop. Does not appear to bind DNA, suggesting indirect transcriptional inhibition. The sequence is that of Period circadian protein (per) from Drosophila mojavensis (Fruit fly).